The primary structure comprises 712 residues: T-box transcription factor TBX2 (712 aa).

The segment at residues L109–D287 is a DNA-binding region (T-box). The disordered stretch occupies residues P313–L450. Pro residues predominate over residues D326–S336. Phosphoserine occurs at positions 336, 342, and 360. Composition is skewed to basic and acidic residues over residues E363–A372, T391–A409, and S421–E444. A repression domain 1 (RD1) region spans residues G518 to A601. Phosphoserine occurs at positions 622, 653, 657, and 676. The segment at L637–E687 is disordered.

Binds DNA as a monomer. Interacts with PML (isoform PML-2, isoform PML-3 and isoform PML-4). In terms of tissue distribution, expressed primarily in adult in kidney, lung, and placenta. Weak expression in heart and ovary.

Its subcellular location is the nucleus. Functionally, transcription factor which acts as a transcriptional repressor. May also function as a transcriptional activator. Binds to the palindromic T site 5'-TTCACACCTAGGTGTGAA-3' DNA sequence, or a half-site, which are present in the regulatory region of several genes. Required for cardiac atrioventricular canal formation. May cooperate with NKX2.5 to negatively modulate expression of NPPA/ANF in the atrioventricular canal. May play a role as a positive regulator of TGFB2 expression, perhaps acting in concert with GATA4 in the developing outflow tract myocardium. Plays a role in limb pattern formation. Acts as a transcriptional repressor of ADAM10 gene expression, perhaps in concert with histone deacetylase HDAC1 as cofactor. Involved in branching morphogenesis in both developing lungs and adult mammary glands, via negative modulation of target genes; acting redundantly with TBX3. Required, together with TBX3, to maintain cell proliferation in the embryonic lung mesenchyme; perhaps acting downstream of SHH, BMP and TGFbeta signaling. Involved in modulating early inner ear development, acting independently of, and also redundantly with TBX3, in different subregions of the developing ear. Acts as a negative regulator of PML function in cellular senescence. Acts as a negative regulator of expression of CDKN1A/p21, IL33 and CCN4; repression of CDKN1A is enhanced in response to UV-induced stress, perhaps as a result of phosphorylation by p38 MAPK. Negatively modulates expression of CDKN2A/p14ARF and CDH1/E-cadherin. Plays a role in induction of the epithelial-mesenchymal transition (EMT). Plays a role in melanocyte proliferation, perhaps via regulation of cyclin CCND1. Involved in melanogenesis, acting via negative modulation of expression of DHICA oxidase/TYRP1 and P protein/OCA2. Involved in regulating retinal pigment epithelium (RPE) cell proliferation, perhaps via negatively modulating transcription of the transcription factor CEBPD. The sequence is that of T-box transcription factor TBX2 (TBX2) from Homo sapiens (Human).